A 131-amino-acid polypeptide reads, in one-letter code: Histone H3-like 4 (131 aa).

Position 10 is an N6,N6,N6-trimethyllysine; alternate (K10). Residue K10 is modified to N6,N6-dimethyllysine; alternate. K10 bears the N6-acetyllysine; alternate mark. An N6-methyllysine; alternate modification is found at K10. T12 carries the phosphothreonine modification. An N6-acetyllysine modification is found at K15. The residue at position 27 (S27) is a Phosphoserine. Residue K32 is modified to N6,N6,N6-trimethyllysine; alternate. Residue K32 is modified to N6,N6-dimethyllysine; alternate. An N6-methyllysine; alternate modification is found at K32.

The protein belongs to the histone H3 family. As to quaternary structure, the nucleosome is a histone octamer containing two molecules each of H2A, H2B, H3 and H4 assembled in one H3-H4 heterotetramer and two H2A-H2B heterodimers. The octamer wraps approximately 147 bp of DNA. As to expression, expressed in roots, seedlings, leaves buds and open flowers.

Its subcellular location is the nucleus. It localises to the chromosome. Its function is as follows. Core component of nucleosome. Nucleosomes wrap and compact DNA into chromatin, limiting DNA accessibility to the cellular machineries which require DNA as a template. Histones thereby play a central role in transcription regulation, DNA repair, DNA replication and chromosomal stability. DNA accessibility is regulated via a complex set of post-translational modifications of histones, also called histone code, and nucleosome remodeling. This chain is Histone H3-like 4, found in Arabidopsis thaliana (Mouse-ear cress).